The sequence spans 113 residues: Hydrogenase maturation factor HybF (113 aa).

Positions 2 and 3 each coordinate Ni(2+). 4 residues coordinate Zn(2+): C73, C76, C89, and C92.

The protein belongs to the HypA/HybF family. HybF subfamily.

Involved in the maturation of [NiFe] hydrogenases. Required for nickel insertion into the metal center of the hydrogenase. This is Hydrogenase maturation factor HybF from Escherichia coli O157:H7.